The chain runs to 353 residues: Photosystem II protein D1 (353 aa).

At threonine 2 the chain carries N-acetylthreonine. At threonine 2 the chain carries Phosphothreonine. Helical transmembrane passes span 29–46, 118–133, and 142–156; these read YIGWFGVLMIPTLLTATS, HFLLGVACYMGREWEL, and WIAIAYSAPVAAATA. Residue histidine 118 coordinates chlorophyll a. Tyrosine 126 serves as a coordination point for pheophytin a. [CaMn4O5] cluster contacts are provided by aspartate 170 and glutamate 189. A helical transmembrane segment spans residues 197-218; sequence FHMLGVAGVFGGSLFSAMHGSL. Chlorophyll a is bound at residue histidine 198. A quinone is bound by residues histidine 215 and 264–265; that span reads SF. Residue histidine 215 participates in Fe cation binding. Position 272 (histidine 272) interacts with Fe cation. A helical membrane pass occupies residues 274–288; the sequence is FLAAWPVIGIWFTAL. Histidine 332, glutamate 333, aspartate 342, and alanine 344 together coordinate [CaMn4O5] cluster. A propeptide spanning residues 345–353 is cleaved from the precursor; it reads TFEVSATNA.

It belongs to the reaction center PufL/M/PsbA/D family. As to quaternary structure, PSII is composed of 1 copy each of membrane proteins PsbA, PsbB, PsbC, PsbD, PsbE, PsbF, PsbH, PsbI, PsbJ, PsbK, PsbL, PsbM, PsbT, PsbX, PsbY, PsbZ, Psb30/Ycf12, at least 3 peripheral proteins of the oxygen-evolving complex and a large number of cofactors. It forms dimeric complexes. Requires The D1/D2 heterodimer binds P680, chlorophylls that are the primary electron donor of PSII, and subsequent electron acceptors. It shares a non-heme iron and each subunit binds pheophytin, quinone, additional chlorophylls, carotenoids and lipids. D1 provides most of the ligands for the Mn4-Ca-O5 cluster of the oxygen-evolving complex (OEC). There is also a Cl(-1) ion associated with D1 and D2, which is required for oxygen evolution. The PSII complex binds additional chlorophylls, carotenoids and specific lipids. as cofactor. Post-translationally, tyr-161 forms a radical intermediate that is referred to as redox-active TyrZ, YZ or Y-Z. C-terminally processed by CTPA; processing is essential to allow assembly of the oxygen-evolving complex and thus photosynthetic growth.

Its subcellular location is the plastid membrane. The catalysed reaction is 2 a plastoquinone + 4 hnu + 2 H2O = 2 a plastoquinol + O2. Its function is as follows. Photosystem II (PSII) is a light-driven water:plastoquinone oxidoreductase that uses light energy to abstract electrons from H(2)O, generating O(2) and a proton gradient subsequently used for ATP formation. It consists of a core antenna complex that captures photons, and an electron transfer chain that converts photonic excitation into a charge separation. The D1/D2 (PsbA/PsbD) reaction center heterodimer binds P680, the primary electron donor of PSII as well as several subsequent electron acceptors. In Cuscuta gronovii (Common dodder), this protein is Photosystem II protein D1.